Consider the following 201-residue polypeptide: Holliday junction branch migration complex subunit RuvA (201 aa).

Positions Met-1 to Ala-64 are domain I. Residues Glu-65–Thr-143 form a domain II region. Residues Leu-144–Thr-152 form a flexible linker region. The domain III stretch occupies residues Ala-153–Val-201.

This sequence belongs to the RuvA family. As to quaternary structure, homotetramer. Forms an RuvA(8)-RuvB(12)-Holliday junction (HJ) complex. HJ DNA is sandwiched between 2 RuvA tetramers; dsDNA enters through RuvA and exits via RuvB. An RuvB hexamer assembles on each DNA strand where it exits the tetramer. Each RuvB hexamer is contacted by two RuvA subunits (via domain III) on 2 adjacent RuvB subunits; this complex drives branch migration. In the full resolvosome a probable DNA-RuvA(4)-RuvB(12)-RuvC(2) complex forms which resolves the HJ.

It is found in the cytoplasm. In terms of biological role, the RuvA-RuvB-RuvC complex processes Holliday junction (HJ) DNA during genetic recombination and DNA repair, while the RuvA-RuvB complex plays an important role in the rescue of blocked DNA replication forks via replication fork reversal (RFR). RuvA specifically binds to HJ cruciform DNA, conferring on it an open structure. The RuvB hexamer acts as an ATP-dependent pump, pulling dsDNA into and through the RuvAB complex. HJ branch migration allows RuvC to scan DNA until it finds its consensus sequence, where it cleaves and resolves the cruciform DNA. In Stutzerimonas stutzeri (strain A1501) (Pseudomonas stutzeri), this protein is Holliday junction branch migration complex subunit RuvA.